Reading from the N-terminus, the 175-residue chain is Deoxyuridine 5'-triphosphate nucleotidohydrolase (175 aa).

Residues 67 to 69 (RSG), Asn-80, 84 to 86 (TVD), and Lys-94 contribute to the substrate site. The disordered stretch occupies residues 138-175 (RAEGGFGSTGGHAAVGADTNGQQGGNRYASVVSDRKGQ).

It belongs to the dUTPase family. It depends on Mg(2+) as a cofactor.

It carries out the reaction dUTP + H2O = dUMP + diphosphate + H(+). It functions in the pathway pyrimidine metabolism; dUMP biosynthesis; dUMP from dCTP (dUTP route): step 2/2. Its function is as follows. This enzyme is involved in nucleotide metabolism: it produces dUMP, the immediate precursor of thymidine nucleotides and it decreases the intracellular concentration of dUTP so that uracil cannot be incorporated into DNA. The protein is Deoxyuridine 5'-triphosphate nucleotidohydrolase of Streptomyces avermitilis (strain ATCC 31267 / DSM 46492 / JCM 5070 / NBRC 14893 / NCIMB 12804 / NRRL 8165 / MA-4680).